A 1029-amino-acid polypeptide reads, in one-letter code: Carbamoyl phosphate synthase large chain (1029 aa).

The tract at residues 1 to 402 is carboxyphosphate synthetic domain; sequence MPKRTDLQTI…SLQKALRSTE (402 aa). ATP-binding residues include arginine 129, arginine 169, glycine 175, glycine 176, glutamate 208, isoleucine 210, glutamate 215, glycine 241, valine 242, histidine 243, glutamine 285, and glutamate 299. An ATP-grasp 1 domain is found at 133–328; sequence QAAMKKIGVE…IAKIAALLAV (196 aa). The Mg(2+) site is built by glutamine 285, glutamate 299, and asparagine 301. Glutamine 285, glutamate 299, and asparagine 301 together coordinate Mn(2+). The oligomerization domain stretch occupies residues 403 to 544; sequence SDIRGVYAEM…YHYSTYEWED (142 aa). Positions 545-929 are carbamoyl phosphate synthetic domain; it reads EVTGTDKPKV…AFYRAQLGAK (385 aa). The ATP-grasp 2 domain occupies 671 to 863; that stretch reads NALCERLGLS…LAKSAARIAV (193 aa). Positions 707, 747, 749, 754, 779, 780, 781, 782, 822, and 834 each coordinate ATP. Glutamine 822, glutamate 834, and asparagine 836 together coordinate Mg(2+). Mn(2+) contacts are provided by glutamine 822, glutamate 834, and asparagine 836. An MGS-like domain is found at 930-1028; that stretch reads SYLPLSGTAL…QDWQTQEAVA (99 aa). The interval 930 to 1029 is allosteric domain; that stretch reads SYLPLSGTAL…DWQTQEAVAG (100 aa).

The protein belongs to the CarB family. Composed of two chains; the small (or glutamine) chain promotes the hydrolysis of glutamine to ammonia, which is used by the large (or ammonia) chain to synthesize carbamoyl phosphate. Tetramer of heterodimers (alpha,beta)4. The cofactor is Mg(2+). Mn(2+) is required as a cofactor.

The catalysed reaction is hydrogencarbonate + L-glutamine + 2 ATP + H2O = carbamoyl phosphate + L-glutamate + 2 ADP + phosphate + 2 H(+). It catalyses the reaction hydrogencarbonate + NH4(+) + 2 ATP = carbamoyl phosphate + 2 ADP + phosphate + 2 H(+). The protein operates within amino-acid biosynthesis; L-arginine biosynthesis; carbamoyl phosphate from bicarbonate: step 1/1. Its pathway is pyrimidine metabolism; UMP biosynthesis via de novo pathway; (S)-dihydroorotate from bicarbonate: step 1/3. Functionally, large subunit of the glutamine-dependent carbamoyl phosphate synthetase (CPSase). CPSase catalyzes the formation of carbamoyl phosphate from the ammonia moiety of glutamine, carbonate, and phosphate donated by ATP, constituting the first step of 2 biosynthetic pathways, one leading to arginine and/or urea and the other to pyrimidine nucleotides. The large subunit (synthetase) binds the substrates ammonia (free or transferred from glutamine from the small subunit), hydrogencarbonate and ATP and carries out an ATP-coupled ligase reaction, activating hydrogencarbonate by forming carboxy phosphate which reacts with ammonia to form carbamoyl phosphate. The protein is Carbamoyl phosphate synthase large chain of Deinococcus deserti (strain DSM 17065 / CIP 109153 / LMG 22923 / VCD115).